Consider the following 264-residue polypeptide: Thymidylate synthase (264 aa).

Residue arginine 21 participates in dUMP binding. Residue histidine 51 coordinates (6R)-5,10-methylene-5,6,7,8-tetrahydrofolate. 126-127 (RR) contacts dUMP. Cysteine 146 (nucleophile) is an active-site residue. Residues 166–169 (RSAD), asparagine 177, and 207–209 (HLY) each bind dUMP. Residue aspartate 169 participates in (6R)-5,10-methylene-5,6,7,8-tetrahydrofolate binding. Alanine 263 contributes to the (6R)-5,10-methylene-5,6,7,8-tetrahydrofolate binding site.

It belongs to the thymidylate synthase family. Bacterial-type ThyA subfamily. As to quaternary structure, homodimer.

Its subcellular location is the cytoplasm. It carries out the reaction dUMP + (6R)-5,10-methylene-5,6,7,8-tetrahydrofolate = 7,8-dihydrofolate + dTMP. It participates in pyrimidine metabolism; dTTP biosynthesis. Functionally, catalyzes the reductive methylation of 2'-deoxyuridine-5'-monophosphate (dUMP) to 2'-deoxythymidine-5'-monophosphate (dTMP) while utilizing 5,10-methylenetetrahydrofolate (mTHF) as the methyl donor and reductant in the reaction, yielding dihydrofolate (DHF) as a by-product. This enzymatic reaction provides an intracellular de novo source of dTMP, an essential precursor for DNA biosynthesis. The protein is Thymidylate synthase of Cupriavidus necator (strain ATCC 17699 / DSM 428 / KCTC 22496 / NCIMB 10442 / H16 / Stanier 337) (Ralstonia eutropha).